We begin with the raw amino-acid sequence, 375 residues long: Erythronate-4-phosphate dehydrogenase (375 aa).

Residue Ser49 participates in substrate binding. Residues Asp150 and Thr178 each contribute to the NAD(+) site. Residue Arg211 is part of the active site. Residue Asp231 participates in NAD(+) binding. Residue Glu236 is part of the active site. The Proton donor role is filled by His253. NAD(+) is bound at residue Gly256.

It belongs to the D-isomer specific 2-hydroxyacid dehydrogenase family. PdxB subfamily. As to quaternary structure, homodimer.

It localises to the cytoplasm. It catalyses the reaction 4-phospho-D-erythronate + NAD(+) = (R)-3-hydroxy-2-oxo-4-phosphooxybutanoate + NADH + H(+). It participates in cofactor biosynthesis; pyridoxine 5'-phosphate biosynthesis; pyridoxine 5'-phosphate from D-erythrose 4-phosphate: step 2/5. Its function is as follows. Catalyzes the oxidation of erythronate-4-phosphate to 3-hydroxy-2-oxo-4-phosphonooxybutanoate. In Hydrogenovibrio crunogenus (strain DSM 25203 / XCL-2) (Thiomicrospira crunogena), this protein is Erythronate-4-phosphate dehydrogenase.